The sequence spans 405 residues: Serpin I2 (405 aa).

Positions Met1–Ala18 are cleaved as a signal peptide. N-linked (GlcNAc...) asparagine glycans are attached at residues Asn202, Asn207, and Asn306.

The protein belongs to the serpin family. In terms of tissue distribution, expressed in pancreas and adipose tissues.

It localises to the secreted. The polypeptide is Serpin I2 (SERPINI2) (Homo sapiens (Human)).